Here is a 148-residue protein sequence, read N- to C-terminus: Macrodomain Ter protein (148 aa).

Belongs to the MatP family. As to quaternary structure, homodimer.

It is found in the cytoplasm. Its function is as follows. Required for spatial organization of the terminus region of the chromosome (Ter macrodomain) during the cell cycle. Prevents early segregation of duplicated Ter macrodomains during cell division. Binds specifically to matS, which is a 13 bp signature motif repeated within the Ter macrodomain. The polypeptide is Macrodomain Ter protein (Haemophilus ducreyi (strain 35000HP / ATCC 700724)).